Here is a 297-residue protein sequence, read N- to C-terminus: Acetyl-coenzyme A carboxylase carboxyl transferase subunit beta (297 aa).

One can recognise a CoA carboxyltransferase N-terminal domain in the interval 27–296; sequence LWHKCPSCEA…PEAAKEVAAV (270 aa). The Zn(2+) site is built by Cys31, Cys34, Cys50, and Cys53. The C4-type zinc-finger motif lies at 31–53; sequence CPSCEAVLYRPELEKTLDVCPKC.

It belongs to the AccD/PCCB family. In terms of assembly, acetyl-CoA carboxylase is a heterohexamer composed of biotin carboxyl carrier protein (AccB), biotin carboxylase (AccC) and two subunits each of ACCase subunit alpha (AccA) and ACCase subunit beta (AccD). The cofactor is Zn(2+).

Its subcellular location is the cytoplasm. The enzyme catalyses N(6)-carboxybiotinyl-L-lysyl-[protein] + acetyl-CoA = N(6)-biotinyl-L-lysyl-[protein] + malonyl-CoA. It participates in lipid metabolism; malonyl-CoA biosynthesis; malonyl-CoA from acetyl-CoA: step 1/1. Its function is as follows. Component of the acetyl coenzyme A carboxylase (ACC) complex. Biotin carboxylase (BC) catalyzes the carboxylation of biotin on its carrier protein (BCCP) and then the CO(2) group is transferred by the transcarboxylase to acetyl-CoA to form malonyl-CoA. This Pseudomonas entomophila (strain L48) protein is Acetyl-coenzyme A carboxylase carboxyl transferase subunit beta.